Here is a 271-residue protein sequence, read N- to C-terminus: 4,5-DOPA dioxygenase extradiol (271 aa).

His22, His57, His177, and His234 together coordinate Zn(2+).

This sequence belongs to the DODA-type extradiol aromatic ring-opening dioxygenase family. In terms of assembly, monomer. Zn(2+) is required as a cofactor.

It is found in the cytoplasm. It carries out the reaction L-dopa + O2 = 4-(L-alanin-3-yl)-2-hydroxy-cis,cis-muconate 6-semialdehyde + H(+). Its function is as follows. In vitro, opens the cyclic ring of dihydroxy-phenylalanine (DOPA) between carbons 4 and 5, thus producing an unstable seco-DOPA that rearranges nonenzymatically to betalamic acid. The physiological substrate is unknown. This is 4,5-DOPA dioxygenase extradiol (ygiD) from Escherichia coli (strain K12).